Here is a 1102-residue protein sequence, read N- to C-terminus: Carbamoyl phosphate synthase large chain (1102 aa).

The interval 1 to 408 (MPKRTDIQSV…AFQKALRSLE (408 aa)) is carboxyphosphate synthetic domain. Residues R129, R175, G181, G182, E214, I216, E221, G247, V248, H249, Q291, and E305 each contribute to the ATP site. One can recognise an ATP-grasp 1 domain in the interval 137 to 334 (EEVRKKIGHG…IAKIAAKLAV (198 aa)). Mg(2+) is bound by residues Q291, E305, and N307. Mn(2+) is bound by residues Q291, E305, and N307. Positions 409-551 (KKGSQFTFVG…YFYSSYDEES (143 aa)) are oligomerization domain. Positions 552-954 (EVAPREKPAV…AYAKSQAGAY (403 aa)) are carbamoyl phosphate synthetic domain. The 192-residue stretch at 682 to 873 (GRVLAEAGLP…LAKAAARISL (192 aa)) folds into the ATP-grasp 2 domain. ATP contacts are provided by R718, R757, L759, E764, G789, I790, H791, S792, Q832, and E844. The Mg(2+) site is built by Q832, E844, and N846. Q832, E844, and N846 together coordinate Mn(2+). One can recognise an MGS-like domain in the interval 955-1100 (GPLPTKGRAF…QEHAAFLIAA (146 aa)). The interval 955–1102 (GPLPTKGRAF…HAAFLIAARD (148 aa)) is allosteric domain.

It belongs to the CarB family. Composed of two chains; the small (or glutamine) chain promotes the hydrolysis of glutamine to ammonia, which is used by the large (or ammonia) chain to synthesize carbamoyl phosphate. Tetramer of heterodimers (alpha,beta)4. Mg(2+) is required as a cofactor. The cofactor is Mn(2+).

The catalysed reaction is hydrogencarbonate + L-glutamine + 2 ATP + H2O = carbamoyl phosphate + L-glutamate + 2 ADP + phosphate + 2 H(+). The enzyme catalyses hydrogencarbonate + NH4(+) + 2 ATP = carbamoyl phosphate + 2 ADP + phosphate + 2 H(+). It participates in amino-acid biosynthesis; L-arginine biosynthesis; carbamoyl phosphate from bicarbonate: step 1/1. The protein operates within pyrimidine metabolism; UMP biosynthesis via de novo pathway; (S)-dihydroorotate from bicarbonate: step 1/3. Large subunit of the glutamine-dependent carbamoyl phosphate synthetase (CPSase). CPSase catalyzes the formation of carbamoyl phosphate from the ammonia moiety of glutamine, carbonate, and phosphate donated by ATP, constituting the first step of 2 biosynthetic pathways, one leading to arginine and/or urea and the other to pyrimidine nucleotides. The large subunit (synthetase) binds the substrates ammonia (free or transferred from glutamine from the small subunit), hydrogencarbonate and ATP and carries out an ATP-coupled ligase reaction, activating hydrogencarbonate by forming carboxy phosphate which reacts with ammonia to form carbamoyl phosphate. The polypeptide is Carbamoyl phosphate synthase large chain (Streptomyces coelicolor (strain ATCC BAA-471 / A3(2) / M145)).